Consider the following 75-residue polypeptide: Exodeoxyribonuclease 7 small subunit (75 aa).

It belongs to the XseB family. As to quaternary structure, heterooligomer composed of large and small subunits.

It is found in the cytoplasm. It carries out the reaction Exonucleolytic cleavage in either 5'- to 3'- or 3'- to 5'-direction to yield nucleoside 5'-phosphates.. Functionally, bidirectionally degrades single-stranded DNA into large acid-insoluble oligonucleotides, which are then degraded further into small acid-soluble oligonucleotides. The sequence is that of Exodeoxyribonuclease 7 small subunit from Listeria innocua serovar 6a (strain ATCC BAA-680 / CLIP 11262).